Here is a 147-residue protein sequence, read N- to C-terminus: Thyrotropin subunit beta (147 aa).

An N-terminal signal peptide occupies residues 1–20 (MELSVAMYGLLCLLFSQAVP). Intrachain disulfides connect Cys-22/Cys-72, Cys-36/Cys-87, Cys-39/Cys-127, Cys-47/Cys-103, Cys-51/Cys-105, and Cys-108/Cys-115. N-linked (GlcNAc...) asparagine glycosylation occurs at Asn-43.

This sequence belongs to the glycoprotein hormones subunit beta family. As to quaternary structure, heterodimer of a common alpha chain and a unique beta chain which confers biological specificity to thyrotropin, lutropin, follitropin and gonadotropin. As to expression, pituitary gland. Higher levels seen in immature fishes than the mature fishes.

Its subcellular location is the secreted. In terms of biological role, indispensable for the control of thyroid structure and metabolism. May play some role in the biological processes of the immature fishes. The polypeptide is Thyrotropin subunit beta (tshb) (Oncorhynchus mykiss (Rainbow trout)).